The primary structure comprises 569 residues: AA9 family lytic polysaccharide monooxygenase A (569 aa).

The signal sequence occupies residues 1 to 16; that stretch reads MRIFSLALGFLPLVAG. Residues His17 and His99 each coordinate Cu(2+). An intrachain disulfide couples Cys59 to Cys189. Asn112 is a glycosylation site (N-linked (GlcNAc...) asparagine). The O2 site is built by His174 and Gln184. Tyr186 is a binding site for Cu(2+). N-linked (GlcNAc...) asparagine glycans are attached at residues Asn244 and Asn381. A compositionally biased stretch (low complexity) spans 399-424; it reads AADATATATATTEDAEATTAAEAAAT. The tract at residues 399–439 is disordered; that stretch reads AADATATATATTEDAEATTAAEAAATSGAGRPGRGHGHGRG. N-linked (GlcNAc...) asparagine glycosylation occurs at Asn472.

It belongs to the polysaccharide monooxygenase AA9 family. It depends on Cu(2+) as a cofactor.

The protein resides in the secreted. The enzyme catalyses [(1-&gt;4)-beta-D-glucosyl]n+m + reduced acceptor + O2 = 4-dehydro-beta-D-glucosyl-[(1-&gt;4)-beta-D-glucosyl]n-1 + [(1-&gt;4)-beta-D-glucosyl]m + acceptor + H2O.. In terms of biological role, lytic polysaccharide monooxygenase (LPMO) that depolymerizes crystalline and amorphous polysaccharides via the oxidation of scissile alpha- or beta-(1-4)-glycosidic bonds, yielding C4 oxidation products. Catalysis by LPMOs requires the reduction of the active-site copper from Cu(II) to Cu(I) by a reducing agent and H(2)O(2) or O(2) as a cosubstrate. This Emericella nidulans (strain FGSC A4 / ATCC 38163 / CBS 112.46 / NRRL 194 / M139) (Aspergillus nidulans) protein is AA9 family lytic polysaccharide monooxygenase A.